The primary structure comprises 305 residues: Superkiller complex protein 8 (305 aa).

An N-acetylmethionine modification is found at methionine 1. Residue threonine 2 is modified to N-acetylthreonine; in WD repeat-containing protein 61, N-terminally processed. 7 WD repeats span residues 14–57 (AHDD…LELQ), 62–101 (GHQLGVVSVDISHTLPIAASSSLDAHIRLWDLENGKQMKS), 104–143 (AGPVDAWTLAFSPDSQHLATGTHMGKVNIFGVESGKKEYS), 146–187 (TRGK…HTLE), 188–227 (GHAMPIRSLTFSPDSQLLVTASDDGYIKIYDVQHANLAGT), 230–269 (GHASWVLNVAFCPDDTHFVSSSSDKSVKVWDVGTRTCIHT), and 272–305 (DHQDQVWGVKYNGNGSKIVSVGDDQEIHVYDCPI).

This sequence belongs to the SKI8 family. In terms of assembly, component of the PAF1 complex, which consists of CDC73, PAF1, LEO1, CTR9, RTF1 and SKIC8. The PAF1 complex interacts with PHF5A. Within the PAF1 complex interacts directly with PHF5A. Component of the SKI complex which consists of SKIC2, SKIC3 and SKIC8.

It localises to the nucleus. Its subcellular location is the cytoplasm. Component of the PAF1 complex (PAF1C) which has multiple functions during transcription by RNA polymerase II and is implicated in regulation of development and maintenance of embryonic stem cell pluripotency. PAF1C associates with RNA polymerase II through interaction with POLR2A CTD non-phosphorylated and 'Ser-2'- and 'Ser-5'-phosphorylated forms and is involved in transcriptional elongation, acting both independently and synergistically with TCEA1 and in cooperation with the DSIF complex and HTATSF1. PAF1C is required for transcription of Hox and Wnt target genes. PAF1C is involved in hematopoiesis and stimulates transcriptional activity of KMT2A/MLL1; it promotes leukemogenesis through association with KMT2A/MLL1-rearranged oncoproteins, such as KMT2A/MLL1-MLLT3/AF9 and KMT2A/MLL1-MLLT1/ENL. PAF1C is involved in histone modifications such as ubiquitination of histone H2B and methylation on histone H3 'Lys-4' (H3K4me3). PAF1C recruits the RNF20/40 E3 ubiquitin-protein ligase complex and the E2 enzyme UBE2A or UBE2B to chromatin which mediate monoubiquitination of 'Lys-120' of histone H2B (H2BK120ub1); UB2A/B-mediated H2B ubiquitination is proposed to be coupled to transcription. PAF1C is involved in mRNA 3' end formation probably through association with cleavage and poly(A) factors. In case of infection by influenza A strain H3N2, PAF1C associates with viral NS1 protein, thereby regulating gene transcription. Required for mono- and trimethylation on histone H3 'Lys-4' (H3K4me3), dimethylation on histone H3 'Lys-79' (H3K4me3). Required for Hox gene transcription. Also acts as a component of the SKI complex, a multiprotein complex that assists the RNA-degrading exosome during the mRNA decay and quality-control pathways. The SKI complex catalyzes mRNA extraction from 80S ribosomal complexes in the 3'-5' direction and channels mRNA to the cytosolic exosome for degradation. SKI-mediated extraction of mRNA from stalled ribosomes allow binding of the Pelota-HBS1L complex and subsequent ribosome disassembly by ABCE1 for ribosome recycling. The chain is Superkiller complex protein 8 (Skic8) from Rattus norvegicus (Rat).